The following is a 683-amino-acid chain: Cyclic nucleotide-gated channel alpha-1 (683 aa).

The Cytoplasmic segment spans residues 1–160 (MKTNIINTWH…PSGNMYYNWL (160 aa)). Residues 34–144 (ACSSFSDNDN…PKEKKEEEKK (111 aa)) are disordered. Residues 105–144 (SKADDKKESKKDPEKKKKKEKEKEKKKEEKPKEKKEEEKK) show a composition bias toward basic and acidic residues. The chain crosses the membrane as a helical span at residues 161 to 182 (FCITLPVMYNWTMIIARACFDE). The Extracellular segment spans residues 183-192 (LQSDYLEYWL). Residues 193–213 (IFDYVSDVVYLADMFVRTRTG) form a helical membrane-spanning segment. Over 214-238 (YLEQGLLVKDELKLIEKYKANLQFK) the chain is Cytoplasmic. A helical membrane pass occupies residues 239–257 (LDVLSVIPTDLLYFKFGWN). The Extracellular segment spans residues 258–262 (YPEIR). Residues 263–281 (LNRLLRISRMFEFFQRTET) traverse the membrane as a helical segment. The Cytoplasmic segment spans residues 282 to 288 (RTNYPNI). Residues 286-394 (PNIFRISNLV…GNIGSMISNM (109 aa)) form an ion conduction pathway region. Residues 289–312 (FRISNLVMYIVIIIHWNACVYYSI) form a helical membrane-spanning segment. Residues 313 to 335 (SKAIGFGNDTWVYPDVNDPEFGR) are Extracellular-facing. An N-linked (GlcNAc...) asparagine glycan is attached at Asn-320. 2 helical membrane passes run 336–370 (LARK…VFVV) and 371–395 (VDFL…SNMN). Residues 353–356 (TIGE) form a selectivity filter region. The interval 396–472 (AARAEFQSRV…DTLKKVRIFA (77 aa)) is C-linker. The Cytoplasmic portion of the chain corresponds to 396-683 (AARAEFQSRV…ESEPTESLQG (288 aa)). Residues 476–596 (AGLLVELVLK…EEKGRQILMK (121 aa)) form a cyclic nucleotide-binding domain region. Residues Gly-536, Ser-539, Arg-552, and Thr-553 each coordinate 3',5'-cyclic GMP. 3',5'-cyclic AMP is bound by residues Arg-552 and Thr-553. A coiled-coil region spans residues 614-668 (LEEKVTRMEGSVDLLQTRFARILAEYESMQQKLKQRLTKVEKFLKPLIETEFSAL).

Belongs to the cyclic nucleotide-gated cation channel (TC 1.A.1.5) family. CNGA1 subfamily. In terms of assembly, forms heterotetrameric channels composed of CNGA1 and CNGB1 subunits with 3:1 stoichiometry. May also form cyclic nucleotide-activated homotetrameric channels, that are efficiently activated by saturating cGMP, but poorly activated by saturating cAMP compared to the heterotetramer with CNGB1. The channel binds Ca(2+)-bound CALM1 via CaM1 and CaM2 regions of the CNGB1 subunit; this interaction modulates the affinity of the channel for cNMPs in response to intracellular Ca(2+) levels. In terms of tissue distribution, rod cells in the retina.

It is found in the cell membrane. The catalysed reaction is Ca(2+)(in) = Ca(2+)(out). It catalyses the reaction Na(+)(in) = Na(+)(out). The enzyme catalyses K(+)(in) = K(+)(out). It carries out the reaction NH4(+)(in) = NH4(+)(out). The catalysed reaction is Rb(+)(in) = Rb(+)(out). It catalyses the reaction Li(+)(in) = Li(+)(out). The enzyme catalyses Cs(+)(in) = Cs(+)(out). Pore-forming subunit of the rod cyclic nucleotide-gated channel. Mediates rod photoresponses at dim light converting transient changes in intracellular cGMP levels into electrical signals. In the dark, cGMP levels are high and keep the channel open enabling a steady inward current carried by Na(+) and Ca(2+) ions that leads to membrane depolarization and neurotransmitter release from synaptic terminals. Upon photon absorption cGMP levels decline leading to channel closure and membrane hyperpolarization that ultimately slows neurotransmitter release and signals the presence of light, the end point of the phototransduction cascade. Conducts cGMP- and cAMP-gated ion currents, with permeability for monovalent and divalent cations. The selectivity for Ca(2+) over Na(+) increases with cGMP concentrations, whereas the selectivity among monovalent ions is independent of the cGMP levels. The protein is Cyclic nucleotide-gated channel alpha-1 of Rattus norvegicus (Rat).